A 334-amino-acid chain; its full sequence is Antho-RFamide neuropeptides (334 aa).

The N-terminal stretch at 1 to 26 (MLVAMTTASYVTILVTLLFHILTINA) is a signal peptide. A propeptide spanning residues 27-116 (KTVTKRAKET…REFQGRFGRE (90 aa)) is cleaved from the precursor. Composition is skewed to basic and acidic residues over residues 115-289 (REQG…RELL) and 303-334 (PQTRFRDVQMTRRNVAKKDKIEESNDEEANKS). A disordered region spans residues 115 to 334 (REQGRFGREE…ESNDEEANKS (220 aa)). Phe-120 is modified (phenylalanine amide). Residues 122-125 (REED) constitute a propeptide that is removed on maturation. Phe-129 is modified (phenylalanine amide). Positions 131–134 (REED) are excised as a propeptide. Phe-138 carries the phenylalanine amide modification. The propeptide occupies 140–142 (REE). Position 146 is a phenylalanine amide (Phe-146). Positions 148–151 (REED) are excised as a propeptide. Position 155 is a phenylalanine amide (Phe-155). Positions 157–160 (REED) are excised as a propeptide. Phe-164 carries the phenylalanine amide modification. The propeptide occupies 166-169 (REED). Phe-173 carries the post-translational modification Phenylalanine amide. The propeptide occupies 175 to 178 (REEE). Phenylalanine amide is present on Phe-182. The propeptide occupies 184–187 (REED). The residue at position 191 (Phe-191) is a Phenylalanine amide. Positions 193–196 (REEE) are excised as a propeptide. A Phenylalanine amide modification is found at Phe-200. The propeptide occupies 202 to 205 (REED). Phenylalanine amide is present on Phe-209. The propeptide occupies 211 to 214 (REED). A Phenylalanine amide modification is found at Phe-218. The propeptide occupies 220–223 (REEE). Phe-227 is modified (phenylalanine amide). Positions 229–233 (KRDED) are excised as a propeptide. At Phe-237 the chain carries Phenylalanine amide. A propeptide spanning residues 239–242 (KRED) is cleaved from the precursor. A Phenylalanine amide modification is found at Phe-246. Positions 248–252 (KRDED) are excised as a propeptide. The residue at position 256 (Phe-256) is a Phenylalanine amide. Positions 258 to 262 (KRDED) are excised as a propeptide. Residue Phe-266 is modified to Phenylalanine amide. The propeptide occupies 268–271 (KRED). Phe-275 carries the phenylalanine amide modification. A propeptide spanning residues 277–280 (KRED) is cleaved from the precursor. Phe-284 carries the phenylalanine amide modification. Residues 286 to 334 (RELLAKLNKRTTSIQEDPQTRFRDVQMTRRNVAKKDKIEESNDEEANKS) constitute a propeptide that is removed on maturation.

The protein belongs to the FARP (FMRFamide related peptide) family. In terms of tissue distribution, neurons associated with smooth muscle fibers.

Its subcellular location is the secreted. In terms of biological role, not known but it could act as a transmitter at neuromuscular synapses. In Calliactis parasitica (Sea anemone), this protein is Antho-RFamide neuropeptides.